The sequence spans 280 residues: 2-dehydro-3-deoxyphosphooctonate aldolase (280 aa).

This sequence belongs to the KdsA family.

The protein localises to the cytoplasm. The catalysed reaction is D-arabinose 5-phosphate + phosphoenolpyruvate + H2O = 3-deoxy-alpha-D-manno-2-octulosonate-8-phosphate + phosphate. It participates in carbohydrate biosynthesis; 3-deoxy-D-manno-octulosonate biosynthesis; 3-deoxy-D-manno-octulosonate from D-ribulose 5-phosphate: step 2/3. Its pathway is bacterial outer membrane biogenesis; lipopolysaccharide biosynthesis. The protein is 2-dehydro-3-deoxyphosphooctonate aldolase of Coxiella burnetii (strain CbuG_Q212) (Coxiella burnetii (strain Q212)).